An 827-amino-acid polypeptide reads, in one-letter code: Transcription factor SOX-6 (827 aa).

The segment covering Met1–Phe10 has biased composition (polar residues). Residues Met1–Pro51 form a disordered region. The span at Thr25–Asp34 shows a compositional bias: basic and acidic residues. Phosphothreonine is present on Thr119. Residues Leu184–Gly262 are a coiled coil. 2 disordered regions span residues Gln334–Tyr361 and Val379–Gly470. Residues Gly341–Gly357 show a composition bias toward basic and acidic residues. Ser399 carries the post-translational modification Phosphoserine. A Phosphothreonine modification is found at Thr401. Residues Lys404 and Lys417 each participate in a glycyl lysine isopeptide (Lys-Gly) (interchain with G-Cter in SUMO) cross-link. Polar residues-rich tracts occupy residues Thr421–Pro431 and Ser439–Lys461. 2 positions are modified to phosphoserine: Ser439 and Ser442. Residues Ile620–Lys688 constitute a DNA-binding region (HMG box). Disordered regions lie at residues Thr752–Leu772 and Ala786–Asn827. Residues Asn795–Asp808 show a composition bias toward acidic residues.

As to quaternary structure, homodimer. Interacts with DAZAP2. May interact with CENPK. Sumoylation inhibits the transcriptional activity. Highly expressed in testis.

Its subcellular location is the nucleus. It is found in the cytoplasm. In terms of biological role, transcription factor that plays a key role in several developmental processes, including neurogenesis, chondrocytes differentiation and cartilage formation. Specifically binds the 5'-AACAAT-3' DNA motif present in enhancers and super-enhancers and promotes expression of genes important for chondrogenesis. Required for overt chondrogenesis when condensed prechondrocytes differentiate into early stage chondrocytes: SOX5 and SOX6 cooperatively bind with SOX9 on active enhancers and super-enhancers associated with cartilage-specific genes, and thereby potentiate SOX9's ability to transactivate. Not involved in precartilaginous condensation, the first step in chondrogenesis, during which skeletal progenitors differentiate into prechondrocytes. Together with SOX5, required to form and maintain a pool of highly proliferating chondroblasts between epiphyses and metaphyses, to form columnar chondroblasts, delay chondrocyte prehypertrophy but promote hypertrophy, and to delay terminal differentiation of chondrocytes on contact with ossification fronts. Binds to the proximal promoter region of the myelin protein MPZ gene, and is thereby involved in the differentiation of oligodendroglia in the developing spinal tube. Binds to the gene promoter of MBP and acts as a transcriptional repressor. The protein is Transcription factor SOX-6 of Mus musculus (Mouse).